A 1676-amino-acid chain; its full sequence is DNA-directed RNA polymerase subunit beta'-beta'' (1676 aa).

The DNA-directed RNA polymerase subunit beta' stretch occupies residues methionine 1–isoleucine 582. Residues cysteine 64, cysteine 66, cysteine 79, and cysteine 82 each coordinate Zn(2+). Aspartate 454, aspartate 456, and aspartate 458 together coordinate Mg(2+). Residues phenylalanine 583–leucine 1676 are DNA-directed RNA polymerase subunit beta''. Residues cysteine 804, cysteine 859, cysteine 866, and cysteine 869 each contribute to the Zn(2+) site.

This sequence in the N-terminal section; belongs to the RNA polymerase beta' chain family. RpoC1 subfamily. In the C-terminal section; belongs to the RNA polymerase beta' chain family. RpoC2 subfamily. As to quaternary structure, in plastids the minimal PEP RNA polymerase catalytic core is composed of four subunits: alpha, beta, beta', and beta''. When a (nuclear-encoded) sigma factor is associated with the core the holoenzyme is formed, which can initiate transcription. Beta' and beta'' are fused in this algae. The cofactor is Mg(2+). Requires Zn(2+) as cofactor.

The protein resides in the plastid. It localises to the chloroplast. The catalysed reaction is RNA(n) + a ribonucleoside 5'-triphosphate = RNA(n+1) + diphosphate. Its function is as follows. DNA-dependent RNA polymerase catalyzes the transcription of DNA into RNA using the four ribonucleoside triphosphates as substrates. This Cyanidioschyzon merolae (strain NIES-3377 / 10D) (Unicellular red alga) protein is DNA-directed RNA polymerase subunit beta'-beta''.